The primary structure comprises 331 residues: Nodulation protein D 2 (331 aa).

Residues 6–63 (LDLNLLVALDALMTERSLTAAARKINLSQPAMSAAVARLRSYFRDELFAMRGRKLVPT) form the HTH lysR-type domain. The H-T-H motif DNA-binding region spans 23 to 42 (LTAAARKINLSQPAMSAAVA).

This sequence belongs to the LysR transcriptional regulatory family.

Its function is as follows. NodD regulates the expression of the nodABCFE genes which encode other nodulation proteins. NodD is also a negative regulator of its own expression. Binds flavonoids as inducers. This chain is Nodulation protein D 2 (nodD2), found in Bradyrhizobium elkanii.